Consider the following 378-residue polypeptide: Probable serine/threonine-protein kinase PBL7 (378 aa).

The segment at 1 to 49 is disordered; it reads MGWIPCSGKSSGRNKTRRNGDHKLDRKSSDCSVSTSEKSRAKSSLSESK. A lipid anchor (N-myristoyl glycine) is attached at G2. The segment covering 18–29 has biased composition (basic and acidic residues); that stretch reads RNGDHKLDRKSS. The segment covering 32–47 has biased composition (low complexity); it reads SVSTSEKSRAKSSLSE. The residue at position 62 (T62) is a Phosphothreonine. In terms of domain architecture, Protein kinase spans 73–350; it reads FRKECLIGEG…ADVVTALSYL (278 aa). Residues 79 to 87 and K102 contribute to the ATP site; that span reads IGEGGFGRV. Y147 is modified (phosphotyrosine). D200 serves as the catalytic Proton acceptor. A phosphoserine mark is found at S204 and S234. Residues T235 and T240 each carry the phosphothreonine modification. Position 248 is a phosphotyrosine (Y248).

Belongs to the protein kinase superfamily. Ser/Thr protein kinase family. Interacts with BSU1 and BSL1. Phosphorylated at Ser-43, Ser-46 and Ser-234. Widely expressed.

It localises to the cell membrane. It catalyses the reaction L-seryl-[protein] + ATP = O-phospho-L-seryl-[protein] + ADP + H(+). It carries out the reaction L-threonyl-[protein] + ATP = O-phospho-L-threonyl-[protein] + ADP + H(+). Serine/threonine-protein kinase involved in the positive regulation of brassinosteroid (BR) signaling and plant growth. Phosphorylates both BSU1 and BSL1 in vitro. The polypeptide is Probable serine/threonine-protein kinase PBL7 (Arabidopsis thaliana (Mouse-ear cress)).